Consider the following 298-residue polypeptide: Quinolinate synthase (298 aa).

Iminosuccinate is bound by residues H19 and S36. Residue C81 participates in [4Fe-4S] cluster binding. Iminosuccinate contacts are provided by residues 107 to 109 (YVN) and S124. C168 provides a ligand contact to [4Fe-4S] cluster. Residues 193 to 195 (HPE) and T210 each bind iminosuccinate. C254 contributes to the [4Fe-4S] cluster binding site.

It belongs to the quinolinate synthase family. Type 2 subfamily. [4Fe-4S] cluster serves as cofactor.

The protein localises to the cytoplasm. The enzyme catalyses iminosuccinate + dihydroxyacetone phosphate = quinolinate + phosphate + 2 H2O + H(+). It functions in the pathway cofactor biosynthesis; NAD(+) biosynthesis; quinolinate from iminoaspartate: step 1/1. In terms of biological role, catalyzes the condensation of iminoaspartate with dihydroxyacetone phosphate to form quinolinate. The chain is Quinolinate synthase from Thermotoga petrophila (strain ATCC BAA-488 / DSM 13995 / JCM 10881 / RKU-1).